The sequence spans 338 residues: NADPH dehydrogenase (338 aa).

23–26 (SPMC) is a binding site for FMN. Residue Y28 coordinates substrate. Residues A60 and Q102 each coordinate FMN. 163-166 (HGAH) contributes to the substrate binding site. Residues R214 and 306–307 (AR) each bind FMN.

Belongs to the NADH:flavin oxidoreductase/NADH oxidase family. NamA subfamily. In terms of assembly, homotetramer. It depends on FMN as a cofactor.

It catalyses the reaction A + NADPH + H(+) = AH2 + NADP(+). Catalyzes the reduction of the double bond of an array of alpha,beta-unsaturated aldehydes and ketones. It also reduces the nitro group of nitroester and nitroaromatic compounds. It could have a role in detoxification processes. This Halalkalibacterium halodurans (strain ATCC BAA-125 / DSM 18197 / FERM 7344 / JCM 9153 / C-125) (Bacillus halodurans) protein is NADPH dehydrogenase.